The following is a 520-amino-acid chain: Probable alginate O-acetylase AlgI (520 aa).

Helical transmembrane passes span 7-24, 39-61, 78-100, 115-137, 150-172, 239-261, 311-333, 353-375, 402-424, and 483-505; these read VFLF…YLSG, FYAW…NYWI, WLIL…NFGV, FVLT…ISYI, NLID…VLRF, LYFD…GFRF, LFLT…IWGA, VLNP…IFRA, ANLT…FFGL, and WLSQ…ASVL. The active site involves H322.

This sequence belongs to the membrane-bound acyltransferase family.

Its subcellular location is the cell inner membrane. It participates in glycan biosynthesis; alginate biosynthesis. Functionally, together with AlgJ and AlgF, forms an inner membrane complex which probably interacts with the alginate polymerization-transport complex and adds acetyl groups at the O-2 and O-3 positions of mannuronate residues. Acetylation of alginate is important for the architecture of biofilms and increases resistance to opsonic killing in the host. This Pseudomonas aeruginosa (strain ATCC 15692 / DSM 22644 / CIP 104116 / JCM 14847 / LMG 12228 / 1C / PRS 101 / PAO1) protein is Probable alginate O-acetylase AlgI (algI).